The primary structure comprises 421 residues: Cell division protein FtsZ (421 aa).

GTP-binding positions include 26–30 (GGGGN), 132–134 (GTG), E163, R167, and N211.

Belongs to the FtsZ family. As to quaternary structure, homodimer. Polymerizes to form a dynamic ring structure in a strictly GTP-dependent manner. Interacts directly with several other division proteins.

It localises to the cytoplasm. Functionally, essential cell division protein that forms a contractile ring structure (Z ring) at the future cell division site. The regulation of the ring assembly controls the timing and the location of cell division. One of the functions of the FtsZ ring is to recruit other cell division proteins to the septum to produce a new cell wall between the dividing cells. Binds GTP and shows GTPase activity. This is Cell division protein FtsZ from Haemophilus influenzae (strain ATCC 51907 / DSM 11121 / KW20 / Rd).